The following is a 1227-amino-acid chain: RNA-binding protein 20 (1227 aa).

Disordered regions lie at residues 1-58 (MVLA…QAGL) and 289-374 (GSHV…SKQG). The segment covering 27 to 42 (PGARASPAPSGPRGMQ) has biased composition (low complexity). Residues 43–56 (QPPPPPQPPPPPQA) show a composition bias toward pro residues. A compositionally biased stretch (polar residues) spans 313–331 (QGTNSQWESPHGFSGQSKP). A U1-type zinc finger spans residues 409–443 (HLPHICSICDKKVFDLKDWELHVKGKLHAQKCLVF). Ser-498 is modified (phosphoserine). An RRM domain is found at 518–593 (RVVHICNLPE…EKLLIRMSKR (76 aa)). Positions 624-634 (EADRYGPERPR) are enriched in basic and acidic residues. Disordered stretches follow at residues 624–906 (EADR…TNME) and 977–1089 (SLKS…ASPP). Residues 628 to 655 (YGPERPRSRSPVSRSLSPRSHTPSFTSC) are RS. 6 positions are modified to phosphoserine: Ser-635, Ser-637, Ser-640, Ser-642, Ser-660, and Ser-679. The span at 636–660 (RSPVSRSLSPRSHTPSFTSCSSSHS) shows a compositional bias: low complexity. 2 stretches are compositionally biased toward basic and acidic residues: residues 674-709 (DSWE…PWAH) and 716-738 (RQLD…EKYP). A compositionally biased stretch (polar residues) spans 741–752 (GSPNLPHSVSSY). Ser-742 carries the post-translational modification Phosphoserine. Composition is skewed to basic and acidic residues over residues 753 to 772 (KSRE…DKYL), 784 to 807 (RKDE…EDGL), and 816 to 856 (EGAK…KEEQ). Ser-801 carries the post-translational modification Phosphoserine. Ser-865, Ser-876, Ser-891, Ser-893, Ser-977, Ser-980, and Ser-1013 each carry phosphoserine. A compositionally biased stretch (basic and acidic residues) spans 868–888 (RQEKEAEFSDPENTRTKKEQD). The segment covering 1024–1036 (CYEKEAKGVESSD) has biased composition (basic and acidic residues). Phosphoserine occurs at positions 1048, 1060, 1080, 1115, and 1120. A Matrin-type zinc finger spans residues 1161–1192 (FYCKLCGLFYTSEETAKMSHCRSAVHYRNLQK). A compositionally biased stretch (basic and acidic residues) spans 1201–1215 (GLKETEGADSPRPED). The interval 1201 to 1227 (GLKETEGADSPRPEDSGIVPRFERKKL) is disordered. The residue at position 1210 (Ser-1210) is a Phosphoserine.

As to quaternary structure, associates with components of the U1 and U2 U1 small nuclear ribonucleoprotein complexes. Phosphorylation regulates the subcellular localization. Phosphorylation of Ser-635 and Ser-637 in the RS (arginine/serine-rich) region promotes nuclear localization of the protein. In contrast, phosphorylation of the C-terminal disordered region promotes localization to cytoplasmic ribonucleoprotein granules. As to expression, mainly expressed in the heart. Also expressed in skeletal muscle tissues, ovary, small intestine and colon.

It is found in the nucleus. It localises to the cytoplasm. The protein localises to the cytoplasmic ribonucleoprotein granule. Its function is as follows. RNA-binding protein that acts as a regulator of mRNA splicing of a subset of genes encoding key structural proteins involved in cardiac development, such as TTN (Titin), CACNA1C, CAMK2D or PDLIM5/ENH. Acts as a repressor of mRNA splicing: specifically binds the 5'UCUU-3' motif that is predominantly found within intronic sequences of pre-mRNAs, leading to the exclusion of specific exons in target transcripts. RBM20-mediated exon skipping is hormone-dependent and is essential for TTN isoform transition in both cardiac and skeletal muscles. RBM20-mediated exon skipping of TTN provides substrates for the formation of circular RNA (circRNAs) from the TTN transcripts. Together with RBM24, promotes the expression of short isoforms of PDLIM5/ENH in cardiomyocytes. This chain is RNA-binding protein 20, found in Homo sapiens (Human).